The sequence spans 86 residues: Small ribosomal subunit protein bS16 (86 aa).

It belongs to the bacterial ribosomal protein bS16 family.

This chain is Small ribosomal subunit protein bS16, found in Borreliella afzelii (strain PKo) (Borrelia afzelii).